The primary structure comprises 1578 residues: Neurexin-3 (1578 aa).

Residues 1–27 form the signal peptide; the sequence is MSFTLHSVFFTLKVSSFLGSLVGLCLG. Residues 28–202 form the Laminin G-like 1 domain; sequence LEFMGLPNQW…SVQLEAEGPC (175 aa). Residues 28 to 1503 are Extracellular-facing; the sequence is LEFMGLPNQW…EVIRESNSTT (1476 aa). Residues asparagine 58 and asparagine 105 are each glycosylated (N-linked (GlcNAc...) asparagine). The region spanning 198–235 is the EGF-like 1 domain; sequence AEGPCGERPCENGGICFLLDGHPTCDCSTTGYGGTLCS. Intrachain disulfides connect cysteine 202/cysteine 213, cysteine 207/cysteine 222, and cysteine 224/cysteine 234. Laminin G-like domains are found at residues 260–444 and 451–643; these read ENVA…VFKC and DPIN…KSSC. The Ca(2+) site is built by aspartate 308, leucine 325, and methionine 378. Intrachain disulfides connect cysteine 408-cysteine 444, cysteine 614-cysteine 643, cysteine 651-cysteine 662, cysteine 656-cysteine 671, and cysteine 673-cysteine 683. The EGF-like 2 domain maps to 647-684; sequence SAKQCDSYPCKNNAVCKDGWNRFICDCTGTGYWGRTCE. 2 consecutive Laminin G-like domains span residues 689–861 and 875–1050; these read ILSY…IDYC and DPVT…DRGC. Positions 736 and 753 each coordinate Ca(2+). N-linked (GlcNAc...) asparagine glycosylation occurs at asparagine 761. Residue arginine 811 coordinates Ca(2+). Cystine bridges form between cysteine 1022/cysteine 1050, cysteine 1057/cysteine 1068, cysteine 1062/cysteine 1077, and cysteine 1079/cysteine 1089. One can recognise an EGF-like 3 domain in the interval 1053 to 1090; that stretch reads PSTTCQEDSCANQGVCMQQWEGFTCDCSMTSYSGNQCN. A Laminin G-like 6 domain is found at 1094-1294; sequence ATYIFGKSGG…NPNIKINGSV (201 aa). Residues aspartate 1146 and isoleucine 1163 each coordinate Ca(2+). N-linked (GlcNAc...) asparagine glycosylation is present at asparagine 1193. Ca(2+)-binding residues include isoleucine 1245 and asparagine 1247. N-linked (GlcNAc...) asparagine glycans are attached at residues asparagine 1291 and asparagine 1335. Positions 1328 to 1352 are disordered; that stretch reads ATTTTRKNRSTASIQPTSDDLVSSA. Polar residues predominate over residues 1337 to 1352; the sequence is STASIQPTSDDLVSSA. Serine 1351 is a glycosylation site (O-linked (Xyl...) (heparan sulfate) serine). Asparagine 1500 carries an N-linked (GlcNAc...) asparagine glycan. Residues 1504–1524 form a helical membrane-spanning segment; it reads GMVVGIVAAAALCILILLYAM. Residues 1525–1578 are Cytoplasmic-facing; it reads YKYRNRDEGSYQVDETRNYISNSAQSNGTLMKEKQASSKSGHKKQKNKDKEYYV. The interval 1546-1578 is disordered; that stretch reads NSAQSNGTLMKEKQASSKSGHKKQKNKDKEYYV.

It belongs to the neurexin family. The laminin G-like domain 2 binds to NXPH1. Isoform 8/alpha-4B binds to alpha-dystroglycan. The cytoplasmic C-terminal region binds to CASK. Specific isoforms bind neuroligins NLGN1, NLGN2 and NLGN3. Interacts with CLSTN3. Post-translationally, O-glycosylated; contains heparan sulfate. Heparan sulfate attachment is required for synapse development by mediating interactions with neuroligins. In terms of tissue distribution, brain.

It is found in the presynaptic cell membrane. Functionally, neuronal cell surface protein that may be involved in cell recognition and cell adhesion. May mediate intracellular signaling. In Rattus norvegicus (Rat), this protein is Neurexin-3 (Nrxn3).